Here is a 202-residue protein sequence, read N- to C-terminus: Small ribosomal subunit protein uS5 (202 aa).

Residues 50–113 enclose the S5 DRBM domain; sequence LKQEILNINV…REAKLNLTPV (64 aa).

It belongs to the universal ribosomal protein uS5 family. As to quaternary structure, part of the 30S ribosomal subunit. Contacts protein S4.

Its function is as follows. With S4 and S12 plays an important role in translational accuracy. The sequence is that of Small ribosomal subunit protein uS5 from Pyrobaculum islandicum (strain DSM 4184 / JCM 9189 / GEO3).